Here is a 62-residue protein sequence, read N- to C-terminus: Conotoxin Lt5.5 (62 aa).

The first 22 residues, 1–22, serve as a signal peptide directing secretion; the sequence is MRCLQVFIIFLLLIPSPPSVDA. Residues 23 to 48 constitute a propeptide that is removed on maturation; it reads QRKTKDDVPLASFHDNAKRTLKRLWN.

This sequence belongs to the conotoxin T superfamily. Contains 2 disulfide bonds that can be either 'C1-C3, C2-C4' or 'C1-C4, C2-C3', since these disulfide connectivities have been observed for conotoxins with cysteine framework V (for examples, see AC P0DQQ7 and AC P81755). Expressed by the venom duct.

It localises to the secreted. The protein is Conotoxin Lt5.5 of Conus litteratus (Lettered cone).